Here is a 258-residue protein sequence, read N- to C-terminus: Granzyme K (258 aa).

The first 23 residues, 1–23 (MSFSSSALVFLVAGIYMSSESFH), serve as a signal peptide directing secretion. Positions 24–25 (TE) are cleaved as a propeptide — activation peptide. The Peptidase S1 domain occupies 26-253 (IIGGREVQPH…YQTWIKSKLA (228 aa)). An intrachain disulfide couples C51 to C67. Catalysis depends on charge relay system residues H66 and D110. Disulfide bonds link C143/C214, C175/C193, and C204/C228. Residue S208 is the Charge relay system of the active site.

It belongs to the peptidase S1 family. Granzyme subfamily. Speen, lungs and liver non-parenchymal cells.

The protein localises to the cytoplasmic granule. This is Granzyme K (Gzmk) from Rattus norvegicus (Rat).